A 29-amino-acid chain; its full sequence is Dermaseptin-J8 (29 aa).

In terms of tissue distribution, expressed by the skin glands.

The protein resides in the secreted. In terms of biological role, has antimicrobial activity. The protein is Dermaseptin-J8 of Phasmahyla jandaia (Jandaia leaf frog).